A 410-amino-acid polypeptide reads, in one-letter code: Probable intron-encoded endonuclease bI1 (410 aa).

Residues 1-131 are COB exon 1 encoded; sequence MRLLKTHPIL…VLMMAIAFLG (131 aa). Transmembrane regions (helical) follow at residues 32-52, 75-95, and 112-132; these read FGSL…FLAM, GWLI…FVYL, and LLWS…FLGF. The segment at 132–410 is COB intron 1 encoded; sequence FNGQKYMCFY…KKNYIVKVIK (279 aa). Residues 196–286 form the GIY-YIG domain; it reads PFSGIYMIVN…LETLKPEYNI (91 aa).

This sequence to endonucleases of group I introns of fungi and phage. Post-translationally, the mature protein may arise from proteolytic cleavage of an in-frame translation of COB exon 1 plus intron 1, containing the bI1 open reading frame.

It is found in the mitochondrion. The protein localises to the membrane. Functionally, mitochondrial DNA endonuclease involved in intron homing. This Mycosarcoma maydis (Corn smut fungus) protein is Probable intron-encoded endonuclease bI1 (bI1).